Reading from the N-terminus, the 210-residue chain is Small ribosomal subunit protein uS3 (210 aa).

Positions Ile17–Lys86 constitute a KH type-2 domain.

Belongs to the universal ribosomal protein uS3 family. Part of the 30S ribosomal subunit.

Binds the lower part of the 30S subunit head. This Pyrococcus furiosus (strain ATCC 43587 / DSM 3638 / JCM 8422 / Vc1) protein is Small ribosomal subunit protein uS3.